We begin with the raw amino-acid sequence, 361 residues long: Chorismate synthase (361 aa).

Residues Arg48 and Arg54 each contribute to the NADP(+) site. FMN-binding positions include 125–127 (RSS), 238–239 (NA), Gly278, 293–297 (KPTSS), and Arg319.

The protein belongs to the chorismate synthase family. In terms of assembly, homotetramer. Requires FMNH2 as cofactor.

It catalyses the reaction 5-O-(1-carboxyvinyl)-3-phosphoshikimate = chorismate + phosphate. It participates in metabolic intermediate biosynthesis; chorismate biosynthesis; chorismate from D-erythrose 4-phosphate and phosphoenolpyruvate: step 7/7. Its function is as follows. Catalyzes the anti-1,4-elimination of the C-3 phosphate and the C-6 proR hydrogen from 5-enolpyruvylshikimate-3-phosphate (EPSP) to yield chorismate, which is the branch point compound that serves as the starting substrate for the three terminal pathways of aromatic amino acid biosynthesis. This reaction introduces a second double bond into the aromatic ring system. The sequence is that of Chorismate synthase from Klebsiella pneumoniae subsp. pneumoniae (strain ATCC 700721 / MGH 78578).